A 136-amino-acid chain; its full sequence is Mini-ribonuclease 3 (136 aa).

Asp20 is an active-site residue.

This sequence belongs to the MrnC RNase family. As to quaternary structure, homodimer. Mg(2+) is required as a cofactor.

It localises to the cytoplasm. In terms of biological role, involved in correct processing of both the 5' and 3' ends of 23S rRNA precursor. Processes 30S rRNA precursor transcript even in absence of ribonuclease 3 (Rnc); Rnc processes 30S rRNA into smaller rRNA precursors. The chain is Mini-ribonuclease 3 from Listeria monocytogenes serovar 1/2a (strain ATCC BAA-679 / EGD-e).